We begin with the raw amino-acid sequence, 180 residues long: Large ribosomal subunit protein uL6 (180 aa).

It belongs to the universal ribosomal protein uL6 family. As to quaternary structure, part of the 50S ribosomal subunit.

Its function is as follows. This protein binds to the 23S rRNA, and is important in its secondary structure. It is located near the subunit interface in the base of the L7/L12 stalk, and near the tRNA binding site of the peptidyltransferase center. The sequence is that of Large ribosomal subunit protein uL6 from Clostridium botulinum (strain ATCC 19397 / Type A).